The primary structure comprises 549 residues: Glucose-6-phosphate isomerase (549 aa).

Residues Lys-80, Lys-228, and Lys-234 each carry the N6-acetyllysine modification. The active-site Proton donor is Glu-355. Catalysis depends on residues His-386 and Lys-514.

This sequence belongs to the GPI family.

It localises to the cytoplasm. The enzyme catalyses alpha-D-glucose 6-phosphate = beta-D-fructose 6-phosphate. It participates in carbohydrate biosynthesis; gluconeogenesis. Its pathway is carbohydrate degradation; glycolysis; D-glyceraldehyde 3-phosphate and glycerone phosphate from D-glucose: step 2/4. Functionally, catalyzes the reversible isomerization of glucose-6-phosphate to fructose-6-phosphate. This Shigella boydii serotype 4 (strain Sb227) protein is Glucose-6-phosphate isomerase.